We begin with the raw amino-acid sequence, 759 residues long: MTTSFVSDWMAQEGQKLSDCKHDDPFSVLGIQPFQGKWIARIWMPEAEEVELLINGSLIPLTPPNHPWIFEALLDENPGSNYQVKVHRGGIKHQQYDPWSFRDEWMGEIDTHLFAEGNHHHIWRRMGAHLSEMNGVCGVMFCLWAPNARSVSVIGEVNSWDGRHHPMQKRMGGIWELFIPGLKEGALYKYEIRTQNGHCYEKSDPYGFEHEVRPAQSSKVSRIDNFKWSDQEWITKRDSSNPLDQPISVYEMHLGSWLHAPSDEPFIEPNGNKRTAVPAADLKPGTRLLTYPELKQKLIKYVKERGFTHIELMPISEHPFDGSWGYQATGWYAPTSRYGTPNEFRAFVDACHSEGIGVILDWVPGHFPKDSHGLAFFDGSHLYEHSDPRIGEHKEWGTLIFNYSRNEVRNFLVANLVFWFEQFHIDGIRVDAVASMLYKDYLRPEGQWIPNEDGGNENTEAVKFLQQANHVLFEHFPGALSIAEESTTWPGVTNPTDVGGLGFNLKWNMGWMHDMLDYFEVDPWFRQFHQNNVTFSITYNYTENFMLALSHDEVVHGKSHLLHKMPGDDWRKYANTRALLAYMWTHPGKKTIFMGMEFGQRKEWNVWDDLEWDLLGYQPHQGIQRLVDDLNVLYKSNPALWRDDFNQYGFQWIDCKDNKNSVISFMRRETLNNEWLIVVANFTPESHPNYRVGVPLEGFYEEIFNTDSDKYGGSNTGNMGGKASEKWSIHEYEDSIDLSLPPLSVLVFKYAQKKSPNEN.

Residue D431 is the Nucleophile of the active site. Residue E484 is the Proton donor of the active site.

It belongs to the glycosyl hydrolase 13 family. GlgB subfamily. In terms of assembly, monomer.

The enzyme catalyses Transfers a segment of a (1-&gt;4)-alpha-D-glucan chain to a primary hydroxy group in a similar glucan chain.. Its pathway is glycan biosynthesis; glycogen biosynthesis. Functionally, catalyzes the formation of the alpha-1,6-glucosidic linkages in glycogen by scission of a 1,4-alpha-linked oligosaccharide from growing alpha-1,4-glucan chains and the subsequent attachment of the oligosaccharide to the alpha-1,6 position. The protein is 1,4-alpha-glucan branching enzyme GlgB of Prochlorococcus marinus (strain MIT 9211).